Here is a 549-residue protein sequence, read N- to C-terminus: MAAKDIRFGEDARSRMVRGVNVLANAVKATLGPKGRNVVLEKSFGAPTITKDGVSVAKEIELADKFENMGAQMVKEVASRTNDDAGDGTTTATVLAQALIREGAKAVAAGMNPMDLKRGIDKAVSAAVAELKNISKPTADDKAIAQVGTISANSDESIGQIIADAMKEVGKEGVITVEEGSGLDNELDVVKGMQFDRGYLSPYFINNQQSQTADLDDPFILLHDKKISNVRDLLPVLEGVAKAGKPLLIVAEEVEGEALATLVVNTIRGIVKVVAVKAPGFGDRRKAMLEDMAVLTGGTVISEEVGLSLEKATIKDLGRAKKVQVSKENTTIIDGVGDKANVDARVAQIKTQIQDTSSDYDREKLQERVAKLAGGVAVIKVGASTEIEMKEKKDRVDDALHATRAAVEEGVVPGGGVALVRAITALAGLKGANEDQNHGIQIALRAMEAPLREIVANAGDEPSVIINKVKEGTGSFGYNAATGEFGDMLQFGILDPTKVTRSALQNAASIAGLMITTEAMVAEAPKKDEPAMGGAGGMGGMGGMGGMDF.

ATP contacts are provided by residues 30–33 (TLGP), Lys51, 87–91 (DGTTT), Gly415, 479–481 (NAA), and Asp495.

Belongs to the chaperonin (HSP60) family. As to quaternary structure, forms a cylinder of 14 subunits composed of two heptameric rings stacked back-to-back. Interacts with the co-chaperonin GroES.

The protein localises to the cytoplasm. The enzyme catalyses ATP + H2O + a folded polypeptide = ADP + phosphate + an unfolded polypeptide.. Together with its co-chaperonin GroES, plays an essential role in assisting protein folding. The GroEL-GroES system forms a nano-cage that allows encapsulation of the non-native substrate proteins and provides a physical environment optimized to promote and accelerate protein folding. The polypeptide is Chaperonin GroEL (Stenotrophomonas maltophilia (strain K279a)).